Here is a 220-residue protein sequence, read N- to C-terminus: MFLRKYPGQLGRQHMNDQESVIYIVDDDNAVLEALSSLVRSIGLRVKCFSSATAFLNDVGQLACGCLILDVRMPEMSGLDVQRKLAELGEQIPIIFISGHGDIPMAVKAIKAGAIDFFTKPFREEDLLGAIRTALKLAPQQKENAPQISELKASYESLSKREQQVLKFVLQGFLNKQTALELDISEATVKVHRHNIMKKMKVSSVQDLVRVTERLKDSLK.

A Response regulatory domain is found at 21-135 (VIYIVDDDNA…DLLGAIRTAL (115 aa)). Asp-70 carries the 4-aspartylphosphate modification. Residues 151 to 216 (LKASYESLSK…DLVRVTERLK (66 aa)) form the HTH luxR-type domain. Positions 175 to 194 (NKQTALELDISEATVKVHRH) form a DNA-binding region, H-T-H motif.

In terms of processing, phosphorylated by TmoS.

It localises to the cytoplasm. Member of the two-component regulatory system TmoS/TmoT involved in the regulation of toluene degradation. Induces expression of tmoX operon. The protein is Response regulator protein TmoT (tmoT) of Ectopseudomonas mendocina (Pseudomonas mendocina).